The chain runs to 257 residues: ECF RNA polymerase sigma factor SigE (257 aa).

The interval 87-153 (MPSWDELVRQ…RITTNLFLDM (67 aa)) is sigma-70 factor domain-2. A Polymerase core binding motif is present at residues 111–114 (NQHD). A sigma-70 factor domain-4 region spans residues 186–236 (SRLGADLQAALDSLPPEFRAAVVLCDIEGLSYEEIGATLGVKLGTVRSRIH). A DNA-binding region (H-T-H motif) is located at residues 211–230 (DIEGLSYEEIGATLGVKLGT).

It belongs to the sigma-70 factor family. ECF subfamily. In terms of assembly, interacts transiently with the RNA polymerase catalytic core formed by RpoA, RpoB, RpoC and RpoZ (2 alpha, 1 beta, 1 beta' and 1 omega subunit) to form the RNA polymerase holoenzyme that can initiate transcription. Interacts (via sigma-70 factor domain 4) with RseA; interaction is abrogated by treatment of cells with H(2)O(2) or detergent.

In terms of biological role, sigma factors are initiation factors that promote the attachment of RNA polymerase to specific initiation sites and are then released. Extracytoplasmic function (ECF) sigma factors are held in an inactive form by an anti-sigma factor until released. This is ECF RNA polymerase sigma factor SigE (sigE) from Mycolicibacterium smegmatis (strain ATCC 700084 / mc(2)155) (Mycobacterium smegmatis).